The chain runs to 309 residues: Homoserine kinase (309 aa).

Residue 91–101 (PIGSGLGSSAC) participates in ATP binding.

It belongs to the GHMP kinase family. Homoserine kinase subfamily.

It localises to the cytoplasm. It carries out the reaction L-homoserine + ATP = O-phospho-L-homoserine + ADP + H(+). Its pathway is amino-acid biosynthesis; L-threonine biosynthesis; L-threonine from L-aspartate: step 4/5. In terms of biological role, catalyzes the ATP-dependent phosphorylation of L-homoserine to L-homoserine phosphate. The chain is Homoserine kinase from Salmonella dublin (strain CT_02021853).